Here is a 314-residue protein sequence, read N- to C-terminus: uncharacterized protein (314 aa).

It to M.leprae ML0607.

This is an uncharacterized protein from Mycobacterium bovis (strain ATCC BAA-935 / AF2122/97).